The following is a 523-amino-acid chain: Pentatricopeptide repeat-containing protein At1g52640, mitochondrial (523 aa).

Residues 1–5 (MAIRT) constitute a mitochondrion transit peptide. PPR repeat units lie at residues 101–135 (SLES…NYFE), 137–171 (SSKV…GIKP), 172–206 (CVDD…GIVP), 207–241 (SAKT…NCVV), 242–276 (DLLA…GLKP), 277–311 (DAYS…DLVP), 312–346 (NVYT…GANP), 347–381 (DTWT…KCLP), 382–416 (DRHT…KFYP), and 417–452 (TVAT…GIPP). The interval 498–523 (KRRRLGRRSENSEDDDDDFELERDTI) is disordered. Over residues 509–523 (SEDDDDDFELERDTI) the composition is skewed to acidic residues.

Belongs to the PPR family. P subfamily.

It is found in the mitochondrion. The polypeptide is Pentatricopeptide repeat-containing protein At1g52640, mitochondrial (Arabidopsis thaliana (Mouse-ear cress)).